The sequence spans 450 residues: Bifunctional protein GlmU (450 aa).

Residues 1–226 (MLAVAVLAAG…PDEVNGINNR (226 aa)) are pyrophosphorylase. Residues 7–10 (LAAG), lysine 21, glutamine 73, and 78–79 (GT) contribute to the UDP-N-acetyl-alpha-D-glucosamine site. Aspartate 103 lines the Mg(2+) pocket. 4 residues coordinate UDP-N-acetyl-alpha-D-glucosamine: glycine 140, glutamate 155, asparagine 170, and asparagine 224. Asparagine 224 contacts Mg(2+). The interval 227–247 (QQLAQCETMLQERLRHHWMAE) is linker. The interval 248 to 450 (GVTFVDPASC…IKENWAGPQG (203 aa)) is N-acetyltransferase. UDP-N-acetyl-alpha-D-glucosamine is bound by residues arginine 329 and lysine 347. Histidine 359 acts as the Proton acceptor in catalysis. UDP-N-acetyl-alpha-D-glucosamine-binding residues include tyrosine 362 and asparagine 373. Acetyl-CoA is bound by residues alanine 376, 382–383 (NY), alanine 419, and arginine 436.

The protein in the N-terminal section; belongs to the N-acetylglucosamine-1-phosphate uridyltransferase family. This sequence in the C-terminal section; belongs to the transferase hexapeptide repeat family. In terms of assembly, homotrimer. The cofactor is Mg(2+).

Its subcellular location is the cytoplasm. The enzyme catalyses alpha-D-glucosamine 1-phosphate + acetyl-CoA = N-acetyl-alpha-D-glucosamine 1-phosphate + CoA + H(+). It carries out the reaction N-acetyl-alpha-D-glucosamine 1-phosphate + UTP + H(+) = UDP-N-acetyl-alpha-D-glucosamine + diphosphate. It functions in the pathway nucleotide-sugar biosynthesis; UDP-N-acetyl-alpha-D-glucosamine biosynthesis; N-acetyl-alpha-D-glucosamine 1-phosphate from alpha-D-glucosamine 6-phosphate (route II): step 2/2. Its pathway is nucleotide-sugar biosynthesis; UDP-N-acetyl-alpha-D-glucosamine biosynthesis; UDP-N-acetyl-alpha-D-glucosamine from N-acetyl-alpha-D-glucosamine 1-phosphate: step 1/1. The protein operates within bacterial outer membrane biogenesis; LPS lipid A biosynthesis. Functionally, catalyzes the last two sequential reactions in the de novo biosynthetic pathway for UDP-N-acetylglucosamine (UDP-GlcNAc). The C-terminal domain catalyzes the transfer of acetyl group from acetyl coenzyme A to glucosamine-1-phosphate (GlcN-1-P) to produce N-acetylglucosamine-1-phosphate (GlcNAc-1-P), which is converted into UDP-GlcNAc by the transfer of uridine 5-monophosphate (from uridine 5-triphosphate), a reaction catalyzed by the N-terminal domain. The protein is Bifunctional protein GlmU of Synechococcus sp. (strain RCC307).